The primary structure comprises 101 residues: YcgL domain-containing protein ACIAD2309 (101 aa).

The YcgL domain occupies M1–D93.

The protein is YcgL domain-containing protein ACIAD2309 of Acinetobacter baylyi (strain ATCC 33305 / BD413 / ADP1).